A 471-amino-acid polypeptide reads, in one-letter code: Exoglucanase 2 (471 aa).

A signal peptide spans 1-18; it reads MIVGILTTLATLATLAAS. Positions 19 to 24 are excised as a propeptide; sequence VPLEER. Q25 bears the Pyrrolidone carboxylic acid mark. The region spanning 26–62 is the CBM1 domain; the sequence is ACSSVWGQCGGQNWSGPTCCASGSTCVYSNDYYSQCL. Low complexity predominate over residues 64–101; sequence GAASSSSSTRAASTTSRVSPTTSRSSSATPPPGSTTTR. Residues 64 to 108 are disordered; it reads GAASSSSSTRAASTTSRVSPTTSRSSSATPPPGSTTTRVPPVGSG. The interval 66-106 is linker; that stretch reads ASSSSSTRAASTTSRVSPTTSRSSSATPPPGSTTTRVPPVG. The catalytic stretch occupies residues 107–471; it reads SGTATYSGNP…LLTNANPSFL (365 aa). Residues T111 and T121 are each glycosylated (O-linked (Man...) threonine). 4 O-linked (Man...) serine glycosylation sites follow: S130, S133, S134, and S139. T146 is a glycosylation site (O-linked (Man...) threonine). A disulfide bridge links C200 with C259. Catalysis depends on D245, which acts as the Proton donor. An N-linked (GlcNAc) asparagine glycan is attached at N313. N334 is a glycosylation site (N-linked (GlcNAc...) (high mannose) asparagine). A disulfide bond links C392 and C439.

The protein belongs to the glycosyl hydrolase 6 (cellulase B) family. Post-translationally, asn-334 contains mainly a high-mannose-type glycan (Hex(7-9)GlcNAc(2)) in a 3:1 ration with a single GlcNAc. Asn-313 was primarily unglycosylated with a small fraction (18%) bearing a single GlcNAc at this site.

The protein localises to the secreted. The catalysed reaction is Hydrolysis of (1-&gt;4)-beta-D-glucosidic linkages in cellulose and cellotetraose, releasing cellobiose from the non-reducing ends of the chains.. Its function is as follows. Exocellobiohydrolases (CBH) that catalyzes the hydrolysis of 1,4-beta-D-glucosidic bonds in cellulose to release the disaccharide cellobiose. The degradation of cellulose involves an interplay between different cellulolytic enzymes. Hydrolysis starts with endoglucanases (EGs), which cut internal beta-1,4-glucosidic bonds in cellulose to reduce the polymerization degree of the substrate and create new chain ends for exocellobiohydrolases (CBHs). The CBHs release the disaccharide cellobiose from the non-reducing end of the cellulose polymer chain. Finally, beta-1,4-glucosidases hydrolyze the cellobiose and other short cello-oligosaccharides into glucose units. The sequence is that of Exoglucanase 2 (cbh2) from Hypocrea jecorina (Trichoderma reesei).